Consider the following 283-residue polypeptide: ATP phosphoribosyltransferase (283 aa).

The protein belongs to the ATP phosphoribosyltransferase family. Long subfamily. The cofactor is Mg(2+).

The protein localises to the cytoplasm. The catalysed reaction is 1-(5-phospho-beta-D-ribosyl)-ATP + diphosphate = 5-phospho-alpha-D-ribose 1-diphosphate + ATP. It participates in amino-acid biosynthesis; L-histidine biosynthesis; L-histidine from 5-phospho-alpha-D-ribose 1-diphosphate: step 1/9. With respect to regulation, feedback inhibited by histidine. Catalyzes the condensation of ATP and 5-phosphoribose 1-diphosphate to form N'-(5'-phosphoribosyl)-ATP (PR-ATP). Has a crucial role in the pathway because the rate of histidine biosynthesis seems to be controlled primarily by regulation of HisG enzymatic activity. This is ATP phosphoribosyltransferase from Phocaeicola vulgatus (strain ATCC 8482 / DSM 1447 / JCM 5826 / CCUG 4940 / NBRC 14291 / NCTC 11154) (Bacteroides vulgatus).